A 218-amino-acid chain; its full sequence is Ropporin-1-like protein (218 aa).

Positions 17–46 (PELTDILKQFTKAAIRTQPADVLQWSAGYF) constitute an RIIa domain.

The protein belongs to the ropporin family. In terms of assembly, component of the axonemal radial spoke complex 1 (RS1), at least composed of spoke head proteins RSPH1, RSPH3, RSPH9 and the cilia-specific component RSPH4A or sperm-specific component RSPH6A, spoke stalk proteins RSPH14, DNAJB13, DYDC1, ROPN1L and NME5, and the anchor protein IQUB. May interact with AKAP3. Interacts with FSCB; the interaction increases upon spermatozoa capacitation conditions. Interacts with CFAP61. Sumoylated, sumoylation decreases upon spermatozoa capacitation conditions.

Its subcellular location is the cell projection. It is found in the cilium. The protein resides in the flagellum. Its function is as follows. Functions as part of axonemal radial spoke complexes that play an important part in the motility of sperm and cilia. Important for male fertility. With ROPN1, involved in fibrous sheath integrity and sperm motility, plays a role in PKA-dependent signaling processes required for spermatozoa capacitation. This is Ropporin-1-like protein (ROPN1L) from Bos taurus (Bovine).